A 142-amino-acid polypeptide reads, in one-letter code: Large ribosomal subunit protein uL11 (142 aa).

Belongs to the universal ribosomal protein uL11 family. Part of the ribosomal stalk of the 50S ribosomal subunit. Interacts with L10 and the large rRNA to form the base of the stalk. L10 forms an elongated spine to which L12 dimers bind in a sequential fashion forming a multimeric L10(L12)X complex. In terms of processing, one or more lysine residues are methylated.

Forms part of the ribosomal stalk which helps the ribosome interact with GTP-bound translation factors. This Tolumonas auensis (strain DSM 9187 / NBRC 110442 / TA 4) protein is Large ribosomal subunit protein uL11.